The following is a 152-amino-acid chain: UPF0719 transmembrane protein MT2674.1 (152 aa).

4 helical membrane passes run 21-41, 62-82, 92-112, and 131-151; these read VATVLYFLVGAAVLVAGFLMV, VVLAATMYVALAIVTIAAIYA, IGVAVYGIVGVALQGVALVIL, and PAVFATAVMLLAVAGVIAAAL.

It belongs to the UPF0719 family.

It is found in the cell membrane. In Mycobacterium tuberculosis (strain CDC 1551 / Oshkosh), this protein is UPF0719 transmembrane protein MT2674.1.